Consider the following 301-residue polypeptide: CRISPR-associated endonuclease Cas1 (301 aa).

Residues glutamate 133, histidine 200, and aspartate 213 each coordinate Mn(2+).

It belongs to the CRISPR-associated endonuclease Cas1 family. In terms of assembly, homodimer, forms a heterotetramer with a Cas2 homodimer. Mg(2+) serves as cofactor. Mn(2+) is required as a cofactor.

In terms of biological role, CRISPR (clustered regularly interspaced short palindromic repeat), is an adaptive immune system that provides protection against mobile genetic elements (viruses, transposable elements and conjugative plasmids). CRISPR clusters contain spacers, sequences complementary to antecedent mobile elements, and target invading nucleic acids. CRISPR clusters are transcribed and processed into CRISPR RNA (crRNA). Acts as a dsDNA endonuclease. Involved in the integration of spacer DNA into the CRISPR cassette. This is CRISPR-associated endonuclease Cas1 from Clostridium sp. (strain SY8519).